Consider the following 432-residue polypeptide: Enolase (432 aa).

Gln-167 contacts (2R)-2-phosphoglycerate. Catalysis depends on Glu-209, which acts as the Proton donor. Mg(2+) contacts are provided by Asp-246, Glu-290, and Asp-317. Residues Lys-342, Arg-371, Ser-372, and Lys-393 each coordinate (2R)-2-phosphoglycerate. Residue Lys-342 is the Proton acceptor of the active site.

The protein belongs to the enolase family. In terms of assembly, component of the RNA degradosome, a multiprotein complex involved in RNA processing and mRNA degradation. The cofactor is Mg(2+).

The protein resides in the cytoplasm. The protein localises to the secreted. It localises to the cell surface. It carries out the reaction (2R)-2-phosphoglycerate = phosphoenolpyruvate + H2O. It participates in carbohydrate degradation; glycolysis; pyruvate from D-glyceraldehyde 3-phosphate: step 4/5. Functionally, catalyzes the reversible conversion of 2-phosphoglycerate (2-PG) into phosphoenolpyruvate (PEP). It is essential for the degradation of carbohydrates via glycolysis. This Klebsiella pneumoniae subsp. pneumoniae (strain ATCC 700721 / MGH 78578) protein is Enolase.